Reading from the N-terminus, the 138-residue chain is uncharacterized protein (138 aa).

Ser-110 is subject to Phosphoserine.

The protein resides in the cytoplasm. It is found in the nucleus. This is an uncharacterized protein from Schizosaccharomyces pombe (strain 972 / ATCC 24843) (Fission yeast).